Reading from the N-terminus, the 787-residue chain is Replication origin-binding protein (787 aa).

The region spanning 39–195 (HFKTFSEQIK…SLCMPHFKSA (157 aa)) is the Helicase ATP-binding domain. 52 to 59 (APMGSGKT) contributes to the ATP binding site.

Belongs to the herpesviridae OriBP family.

In terms of biological role, probably involved in DNA replication. Binds the origin of replication (ori). This Human herpesvirus 7 (strain JI) (HHV-7) protein is Replication origin-binding protein (U73).